A 571-amino-acid polypeptide reads, in one-letter code: Proline--tRNA ligase (571 aa).

The protein belongs to the class-II aminoacyl-tRNA synthetase family. ProS type 1 subfamily. In terms of assembly, homodimer.

It localises to the cytoplasm. It catalyses the reaction tRNA(Pro) + L-proline + ATP = L-prolyl-tRNA(Pro) + AMP + diphosphate. Catalyzes the attachment of proline to tRNA(Pro) in a two-step reaction: proline is first activated by ATP to form Pro-AMP and then transferred to the acceptor end of tRNA(Pro). As ProRS can inadvertently accommodate and process non-cognate amino acids such as alanine and cysteine, to avoid such errors it has two additional distinct editing activities against alanine. One activity is designated as 'pretransfer' editing and involves the tRNA(Pro)-independent hydrolysis of activated Ala-AMP. The other activity is designated 'posttransfer' editing and involves deacylation of mischarged Ala-tRNA(Pro). The misacylated Cys-tRNA(Pro) is not edited by ProRS. This is Proline--tRNA ligase from Aliivibrio fischeri (strain MJ11) (Vibrio fischeri).